A 152-amino-acid polypeptide reads, in one-letter code: UPF0225 protein YchJ (152 aa).

It belongs to the UPF0225 family.

This Shigella flexneri serotype 5b (strain 8401) protein is UPF0225 protein YchJ.